The primary structure comprises 280 residues: Small ribosomal subunit protein uS3 (280 aa).

The 69-residue stretch at 38–106 folds into the KH type-2 domain; the sequence is IRRLLSTGLE…QVQLNILEVR (69 aa). The segment at 215–280 is disordered; sequence AAAAPAGAER…PAAEPQSTES (66 aa). Positions 238–280 are enriched in low complexity; sequence SGASGTTATGTEAGRAAASADESTAAGQPAEAAPAAEPQSTES.

This sequence belongs to the universal ribosomal protein uS3 family. As to quaternary structure, part of the 30S ribosomal subunit. Forms a tight complex with proteins S10 and S14.

In terms of biological role, binds the lower part of the 30S subunit head. Binds mRNA in the 70S ribosome, positioning it for translation. This chain is Small ribosomal subunit protein uS3, found in Mycobacterium avium (strain 104).